We begin with the raw amino-acid sequence, 1373 residues long: DNA-directed RNA polymerase subunit beta'' (1373 aa).

4 residues coordinate Zn(2+): Cys-220, Cys-293, Cys-300, and Cys-303.

The protein belongs to the RNA polymerase beta' chain family. RpoC2 subfamily. In plastids the minimal PEP RNA polymerase catalytic core is composed of four subunits: alpha, beta, beta', and beta''. When a (nuclear-encoded) sigma factor is associated with the core the holoenzyme is formed, which can initiate transcription. Zn(2+) is required as a cofactor.

It is found in the plastid. The protein localises to the chloroplast. The enzyme catalyses RNA(n) + a ribonucleoside 5'-triphosphate = RNA(n+1) + diphosphate. DNA-dependent RNA polymerase catalyzes the transcription of DNA into RNA using the four ribonucleoside triphosphates as substrates. The chain is DNA-directed RNA polymerase subunit beta'' from Lepidium virginicum (Virginia pepperweed).